A 162-amino-acid polypeptide reads, in one-letter code: UPF0114 protein Sputw3181_3501 (162 aa).

3 helical membrane-spanning segments follow: residues 15–35 (IMAP…IKFF), 53–73 (LVLV…IVMV), and 136–156 (IMWY…MGYL).

This sequence belongs to the UPF0114 family.

The protein resides in the cell membrane. The sequence is that of UPF0114 protein Sputw3181_3501 from Shewanella sp. (strain W3-18-1).